The chain runs to 158 residues: SsrA-binding protein (158 aa).

The interval 130-158 (KGKKNHDKREAQAKRDWSRQKQRLLKDHG) is disordered. A compositionally biased stretch (basic and acidic residues) spans 136 to 158 (DKREAQAKRDWSRQKQRLLKDHG).

It belongs to the SmpB family.

The protein localises to the cytoplasm. Required for rescue of stalled ribosomes mediated by trans-translation. Binds to transfer-messenger RNA (tmRNA), required for stable association of tmRNA with ribosomes. tmRNA and SmpB together mimic tRNA shape, replacing the anticodon stem-loop with SmpB. tmRNA is encoded by the ssrA gene; the 2 termini fold to resemble tRNA(Ala) and it encodes a 'tag peptide', a short internal open reading frame. During trans-translation Ala-aminoacylated tmRNA acts like a tRNA, entering the A-site of stalled ribosomes, displacing the stalled mRNA. The ribosome then switches to translate the ORF on the tmRNA; the nascent peptide is terminated with the 'tag peptide' encoded by the tmRNA and targeted for degradation. The ribosome is freed to recommence translation, which seems to be the essential function of trans-translation. The protein is SsrA-binding protein of Ruegeria sp. (strain TM1040) (Silicibacter sp.).